A 487-amino-acid chain; its full sequence is Serine/threonine-protein kinase 4 (487 aa).

The residue at position 1 (M1) is an N-acetylmethionine. At T3 the chain carries Phosphothreonine. A Protein kinase domain is found at 30–281; sequence FDVLEKLGEG…ATQLLQHPFV (252 aa). ATP is bound by residues 36 to 44 and K59; that span reads LGEGSYGSV. D149 acts as the Proton acceptor in catalysis. T183 carries the post-translational modification Phosphothreonine; by autocatalysis. 2 positions are modified to phosphoserine: S265 and S320. Residues 289–327 adopt a coiled-coil conformation; it reads ILRDLINEAMDVKLKRQEAQQREVDQEEEENSEEDELDS. Positions 305-332 are disordered; sequence QEAQQREVDQEEEENSEEDELDSGTMVR. Residues 313–326 are compositionally biased toward acidic residues; the sequence is DQEEEENSEEDELD. Phosphothreonine occurs at positions 340 and 367. A Phosphothreonine; by PKB/AKT1 modification is found at T387. Residues S410 and S414 each carry the phosphoserine modification. Y433 is modified (phosphotyrosine). The SARAH domain occupies 433–480; that stretch reads YEFLKSWTVEDLQKRLLALDPMMEQEIEEIRQKYQSKRQPILDAIEAK.

The protein belongs to the protein kinase superfamily. STE Ser/Thr protein kinase family. STE20 subfamily. Homodimer; mediated via the coiled-coil region. Interacts with NORE1, which inhibits autoactivation. Interacts with and stabilizes SAV1. Interacts with RASSF1. Interacts with FOXO3. Interacts with RASSF2 (via SARAH domain). Interacts with AR, PKB/AKT1, TNNI3 and SIRT1. Interacts with DLG5 (via PDZ domain 3). Interacts with MARK3 and SCRIB in the presence of DLG5. Requires Mg(2+) as cofactor. Autophosphorylated on serine and threonine residues. Phosphorylation at Thr-387 by PKB/AKT1, leads to inhibition of its: kinase activity, nuclear translocation and autophosphorylation at Thr-183. It also diminishes its cleavage by caspases and its ability to phosphorylate FOXO3. In terms of processing, proteolytically cleaved by caspase-3 during apoptosis at Asp-326 and Asp-349 resulting in a 37 kDa or a 39 kDa subunit respectively. The 39 kDa subunit is further cleaved into the 37 kDa form. Proteolytic cleavage results in kinase activation and nuclear translocation of the truncated form (MST1/N). It is less likely that cleavage at Asp-349 is a prerequisite for activation as this site is not conserved in the murine ortholog.

Its subcellular location is the cytoplasm. It localises to the nucleus. The enzyme catalyses L-seryl-[protein] + ATP = O-phospho-L-seryl-[protein] + ADP + H(+). The catalysed reaction is L-threonyl-[protein] + ATP = O-phospho-L-threonyl-[protein] + ADP + H(+). Its activity is regulated as follows. Inhibited by the C-terminal non-catalytic region. Activated by caspase-cleavage. Full activation also requires homodimerization and autophosphorylation of Thr-183. Activated by RASSF1 which acts by preventing its dephosphorylation. In terms of biological role, stress-activated, pro-apoptotic kinase which, following caspase-cleavage, enters the nucleus and induces chromatin condensation followed by internucleosomal DNA fragmentation. Key component of the Hippo signaling pathway which plays a pivotal role in organ size control and tumor suppression by restricting proliferation and promoting apoptosis. The core of this pathway is composed of a kinase cascade wherein STK3/MST2 and STK4/MST1, in complex with its regulatory protein SAV1, phosphorylates and activates LATS1/2 in complex with its regulatory protein MOB1, which in turn phosphorylates and inactivates YAP1 oncoprotein and WWTR1/TAZ. Phosphorylation of YAP1 by LATS2 inhibits its translocation into the nucleus to regulate cellular genes important for cell proliferation, cell death, and cell migration. STK3/MST2 and STK4/MST1 are required to repress proliferation of mature hepatocytes, to prevent activation of facultative adult liver stem cells (oval cells), and to inhibit tumor formation. Phosphorylates 'Ser-14' of histone H2B (H2BS14ph) during apoptosis. Phosphorylates FOXO3 upon oxidative stress, which results in its nuclear translocation and cell death initiation. Phosphorylates MOBKL1A, MOBKL1B and RASSF2. Phosphorylates TNNI3 (cardiac Tn-I) and alters its binding affinity to TNNC1 (cardiac Tn-C) and TNNT2 (cardiac Tn-T). Phosphorylates FOXO1 on 'Ser-212' and regulates its activation and stimulates transcription of PMAIP1 in a FOXO1-dependent manner. Phosphorylates SIRT1 and inhibits SIRT1-mediated p53/TP53 deacetylation, thereby promoting p53/TP53 dependent transcription and apoptosis upon DNA damage. Acts as an inhibitor of PKB/AKT1. Phosphorylates AR on 'Ser-650' and suppresses its activity by intersecting with PKB/AKT1 signaling and antagonizing formation of AR-chromatin complexes. The chain is Serine/threonine-protein kinase 4 (STK4) from Bos taurus (Bovine).